The sequence spans 375 residues: Chaperone protein DnaJ (375 aa).

Residues 5 to 70 enclose the J domain; sequence DYYSLLEVER…QKRAAYDRYG (66 aa). The segment at 135 to 213 adopts a CR-type zinc-finger fold; it reads GKTVDIEIDV…CHGEGRCEKH (79 aa). Residues Cys-148, Cys-151, Cys-165, Cys-168, Cys-187, Cys-190, Cys-201, and Cys-204 each coordinate Zn(2+). CXXCXGXG motif repeat units follow at residues 148–155, 165–172, 187–194, and 201–208; these read CDACHGSG, CDTCHGSG, CPVCQGKG, and CPECHGEG.

It belongs to the DnaJ family. Homodimer. It depends on Zn(2+) as a cofactor.

The protein localises to the cytoplasm. In terms of biological role, participates actively in the response to hyperosmotic and heat shock by preventing the aggregation of stress-denatured proteins and by disaggregating proteins, also in an autonomous, DnaK-independent fashion. Unfolded proteins bind initially to DnaJ; upon interaction with the DnaJ-bound protein, DnaK hydrolyzes its bound ATP, resulting in the formation of a stable complex. GrpE releases ADP from DnaK; ATP binding to DnaK triggers the release of the substrate protein, thus completing the reaction cycle. Several rounds of ATP-dependent interactions between DnaJ, DnaK and GrpE are required for fully efficient folding. Also involved, together with DnaK and GrpE, in the DNA replication of plasmids through activation of initiation proteins. The chain is Chaperone protein DnaJ from Zymomonas mobilis subsp. mobilis (strain ATCC 31821 / ZM4 / CP4).